A 206-amino-acid polypeptide reads, in one-letter code: Ribosomal RNA large subunit methyltransferase E (206 aa).

Residues Gly-60, Trp-62, Asp-80, Asp-96, and Asp-121 each contribute to the S-adenosyl-L-methionine site. The active-site Proton acceptor is Lys-161.

The protein belongs to the class I-like SAM-binding methyltransferase superfamily. RNA methyltransferase RlmE family.

The protein resides in the cytoplasm. It catalyses the reaction uridine(2552) in 23S rRNA + S-adenosyl-L-methionine = 2'-O-methyluridine(2552) in 23S rRNA + S-adenosyl-L-homocysteine + H(+). Functionally, specifically methylates the uridine in position 2552 of 23S rRNA at the 2'-O position of the ribose in the fully assembled 50S ribosomal subunit. In Nitrosomonas europaea (strain ATCC 19718 / CIP 103999 / KCTC 2705 / NBRC 14298), this protein is Ribosomal RNA large subunit methyltransferase E.